Consider the following 354-residue polypeptide: MIESFNQFGSSLLGGFWPVVWNLIKIVALIAPLMGCVAYLTLWERKAIGWTQIRPGPNRVGPWGLLTPIADAVKLIFKEIILPTAANKGLFLLGPVMTIMPALAAWVVVPFGPEVALANINAGLLFLMAITSMEVYGVIIAGWASNSKYAFLGALRASAQMVSYEIAMGFALVVVLMVSGTLNMTEIVLGQDRGRFADMGLNFLSWNWLPLFPIFIVYFISGLAETNRHPFDVVEGESEIVAGHMIEYSGMAFAMFFLAEYANMILISALAVTMFLGGWLPPIDSVVFNWIPGWIWLGLKTFVVVTMFLWVRSTFPRFRYDQIMRLGWKIFIPITLIWLVVVGLWIQSPWNIWK.

The next 10 helical transmembrane spans lie at 12–32 (LLGG…LIAP), 62–82 (PWGL…EIIL), 89–109 (GLFL…WVVV), 124–144 (LLFL…AGWA), 162–182 (VSYE…SGTL), 203–223 (FLSW…ISGL), 239–259 (EIVA…FFLA), 263–283 (NMIL…LPPI), 291–311 (IPGW…FLWV), and 326–346 (LGWK…GLWI).

Belongs to the complex I subunit 1 family. In terms of assembly, NDH-1 is composed of 14 different subunits. Subunits NuoA, H, J, K, L, M, N constitute the membrane sector of the complex.

It is found in the cell inner membrane. The catalysed reaction is a quinone + NADH + 5 H(+)(in) = a quinol + NAD(+) + 4 H(+)(out). NDH-1 shuttles electrons from NADH, via FMN and iron-sulfur (Fe-S) centers, to quinones in the respiratory chain. The immediate electron acceptor for the enzyme in this species is believed to be ubiquinone. Couples the redox reaction to proton translocation (for every two electrons transferred, four hydrogen ions are translocated across the cytoplasmic membrane), and thus conserves the redox energy in a proton gradient. This subunit may bind ubiquinone. In Methylibium petroleiphilum (strain ATCC BAA-1232 / LMG 22953 / PM1), this protein is NADH-quinone oxidoreductase subunit H.